We begin with the raw amino-acid sequence, 234 residues long: MGQKVNPVGLRLGINRNWTSRWFPSARTAPSNIDEDNKIRKFLKKELYYAGVSQIVIERAAKKLRVTVVAARPGLIIGKKGVDIEKVKEGLKTLIKKEVSINIKEVKRPQADAQLAAENVATQLEKRVAFRRAMKKVMQAALKSGAKGVKVRVSGRLAGAEIARTEWYMEGRVPLHTLRAKIDYGFAEAMTVYGIIGVKVWIFKGEVLQKGIQFEKKEEVKEEREPRRSRRGRQ.

One can recognise a KH type-2 domain in the interval 39-107; the sequence is IRKFLKKELY…EVSINIKEVK (69 aa).

Belongs to the universal ribosomal protein uS3 family. Part of the 30S ribosomal subunit. Forms a tight complex with proteins S10 and S14.

Binds the lower part of the 30S subunit head. Binds mRNA in the 70S ribosome, positioning it for translation. This chain is Small ribosomal subunit protein uS3, found in Helicobacter acinonychis (strain Sheeba).